The following is a 635-amino-acid chain: Extracellular metalloproteinase MEP (635 aa).

Positions 1-19 are cleaved as a signal peptide; it reads MRYSLSLALLGVAAVTVVA. A propeptide spanning residues 20–242 is cleaved from the precursor; sequence HPHTPGRHGV…VHGVVDYVSH (223 aa). His-428 is a Zn(2+) binding site. The active site involves Glu-429. His-432 provides a ligand contact to Zn(2+). Asn-473 is a glycosylation site (N-linked (GlcNAc...) asparagine).

The protein belongs to the peptidase M36 family. Requires Zn(2+) as cofactor.

It localises to the secreted. Secreted metalloproteinase that allows assimilation of proteinaceous substrates. The protein is Extracellular metalloproteinase MEP (MEP) of Pyricularia oryzae (strain 70-15 / ATCC MYA-4617 / FGSC 8958) (Rice blast fungus).